Reading from the N-terminus, the 293-residue chain is Energy-coupling factor transporter ATP-binding protein EcfA2 (293 aa).

An ABC transporter domain is found at 3 to 246 (ITFQKVEHRY…ADELEKIGVD (244 aa)). 40 to 47 (GHTGSGKS) is an ATP binding site.

It belongs to the ABC transporter superfamily. Energy-coupling factor EcfA family. As to quaternary structure, forms a stable energy-coupling factor (ECF) transporter complex composed of 2 membrane-embedded substrate-binding proteins (S component), 2 ATP-binding proteins (A component) and 2 transmembrane proteins (T component).

The protein localises to the cell membrane. In terms of biological role, ATP-binding (A) component of a common energy-coupling factor (ECF) ABC-transporter complex. Unlike classic ABC transporters this ECF transporter provides the energy necessary to transport a number of different substrates. The protein is Energy-coupling factor transporter ATP-binding protein EcfA2 of Bacillus cereus (strain ATCC 10987 / NRS 248).